The following is a 328-amino-acid chain: UDP-N-acetylglucosamine transporter YEA4 (328 aa).

10 helical membrane-spanning segments follow: residues 1-21 (MSFV…VISF), 30-50 (INLG…IQLP), 66-86 (HIPL…SVAN), 98-118 (IHII…WAVC), 122-142 (YSKL…VASL), 166-186 (SMFG…LSLL), 198-218 (WKET…LGYT), 241-261 (LPIA…FICI), 274-294 (LTLS…SVYI), and 298-318 (VLSV…GLYS).

The protein belongs to the nucleotide-sugar transporter family. SLC35A subfamily.

Its subcellular location is the golgi apparatus membrane. In terms of biological role, sugar transporter that specifically mediates the transport of UDP-N-acetylglucosamine (UDP-GlcNAc) from the cytosol into Golgi vesicles where glycosyltransferases function. This is UDP-N-acetylglucosamine transporter YEA4 (YEA4) from Kluyveromyces lactis (strain ATCC 8585 / CBS 2359 / DSM 70799 / NBRC 1267 / NRRL Y-1140 / WM37) (Yeast).